The following is an 83-amino-acid chain: Cytochrome b559 subunit alpha (83 aa).

Residues 21–35 (VIHSITIPSLFIAGW) traverse the membrane as a helical segment. Heme is bound at residue histidine 23.

This sequence belongs to the PsbE/PsbF family. As to quaternary structure, heterodimer of an alpha subunit and a beta subunit. PSII is composed of 1 copy each of membrane proteins PsbA, PsbB, PsbC, PsbD, PsbE, PsbF, PsbH, PsbI, PsbJ, PsbK, PsbL, PsbM, PsbT, PsbX, PsbY, PsbZ, Psb30/Ycf12, at least 3 peripheral proteins of the oxygen-evolving complex and a large number of cofactors. It forms dimeric complexes. The cofactor is heme b.

It localises to the plastid. Its subcellular location is the chloroplast thylakoid membrane. Its function is as follows. This b-type cytochrome is tightly associated with the reaction center of photosystem II (PSII). PSII is a light-driven water:plastoquinone oxidoreductase that uses light energy to abstract electrons from H(2)O, generating O(2) and a proton gradient subsequently used for ATP formation. It consists of a core antenna complex that captures photons, and an electron transfer chain that converts photonic excitation into a charge separation. In Chaetosphaeridium globosum (Charophycean green alga), this protein is Cytochrome b559 subunit alpha.